We begin with the raw amino-acid sequence, 854 residues long: DNA mismatch repair protein MutS (854 aa).

Residues 1–21 form a disordered region; that stretch reads MTASDIQPTEPHTPPTPHADT. ATP is bound at residue 658 to 665; sequence GPNASGKS.

The protein belongs to the DNA mismatch repair MutS family.

In terms of biological role, this protein is involved in the repair of mismatches in DNA. It is possible that it carries out the mismatch recognition step. This protein has a weak ATPase activity. The polypeptide is DNA mismatch repair protein MutS (Trichormus variabilis (strain ATCC 29413 / PCC 7937) (Anabaena variabilis)).